The following is a 371-amino-acid chain: Protein SPATA31F3 (371 aa).

The chain crosses the membrane as a helical span at residues 7-29 (ILWDVGSSVYTYGSLFIIALIIW). A coiled-coil region spans residues 62-86 (LRVKKRTTKEETEKLQKLLSNMKRQ). Composition is skewed to polar residues over residues 189–203 (LSKV…LSSQ) and 244–266 (PQQQ…SSSS). Disordered stretches follow at residues 189-222 (LSKV…STDQ), 240-299 (YHPA…EAEM), and 326-371 (YKSE…KRNI). S197 and S198 each carry phosphoserine. Residues 277–287 (QKKRKKTKKLV) are compositionally biased toward basic residues. Residues 330-362 (TGAKPKTGEPKKSSAKVRAEEPNLEKHAKDLKA) show a composition bias toward basic and acidic residues.

The protein belongs to the SPATA31 family.

It localises to the membrane. This chain is Protein SPATA31F3 (Spata31f3), found in Mus musculus (Mouse).